Here is a 98-residue protein sequence, read N- to C-terminus: Integration host factor subunit alpha (98 aa).

The disordered stretch occupies residues 51–71; it reads NFDLRDKNERPGRNPKTGEDI. The span at 53–69 shows a compositional bias: basic and acidic residues; that stretch reads DLRDKNERPGRNPKTGE.

It belongs to the bacterial histone-like protein family. In terms of assembly, heterodimer of an alpha and a beta chain.

In terms of biological role, this protein is one of the two subunits of integration host factor, a specific DNA-binding protein that functions in genetic recombination as well as in transcriptional and translational control. The polypeptide is Integration host factor subunit alpha (Vibrio parahaemolyticus serotype O3:K6 (strain RIMD 2210633)).